Here is a 495-residue protein sequence, read N- to C-terminus: MSTLALVAFVLWAAFLRYLPKILNFLRLQRFAKTLPGPTIGELIANVKKGEILNWLKELREKHGPVFRIWFGKDLMVMFTDPEDIKQLLGNNQLLTKSRNYELLEPWLGKGLLTNGGESWHRRRKLLTPGFHFRILSEFKEPMEENCRILVRRLRTKANGESFDIYPYITLFALDAICETAMGIKKHAQLQSDSEYVQAVQSICRVMHKQSFSFWQRLNVFFKHTKPGKEREAALKVLHDETNRVIRLRREQLIQERNEWKPEAEQDDVGAKRRLAFLDMLLLTQMEGGAELSDTDIREEVDTFMFEGHDTTSSAIAFALSLLSKNPDVQQRAFEEASELEGREKESMPYLEAVIKETLRIYPSVPFFSRKVLEDLEVGKLTVPKGASISCLIYMLHRDPKNFPDPERFDPDRFLVNEKQMHPFAFAAFSAGPRNCIGQKFAMLELKTSLAMLLRSYRFLPDKDHQPKPLAELVTKSGNGIRLRILPRDENGTTA.

Residues Glu-307 and Cys-436 each contribute to the heme site.

Belongs to the cytochrome P450 family. Heme serves as cofactor.

The protein resides in the endoplasmic reticulum membrane. The protein localises to the microsome membrane. Functionally, may be involved in the metabolism of insect hormones and in the breakdown of synthetic insecticides. This is Probable cytochrome P450 4s3 (Cyp4s3) from Drosophila melanogaster (Fruit fly).